The chain runs to 261 residues: Undecaprenyl-diphosphatase (261 aa).

8 helical membrane passes run 16-36 (TEFLPVSSSAHLVLVPWLFGF), 40-60 (GLVFDVALHLGTLVAVLVYFW), 82-102 (FWFLVVATIPGVVVGYFLEDI), 107-127 (LRAPLLIGVLLIMMGGVLYLA), 140-160 (IRFGDAMAIGLSQALAIIPGV), 183-203 (FSFLLSTPIIFGAGLMQMLKM), 211-231 (SFVLGVFTSAVVGFLAIWFLI), and 239-259 (FNIFVIYRVLLGLTVIVIALL).

This sequence belongs to the UppP family.

The protein localises to the cell membrane. The catalysed reaction is di-trans,octa-cis-undecaprenyl diphosphate + H2O = di-trans,octa-cis-undecaprenyl phosphate + phosphate + H(+). Its function is as follows. Catalyzes the dephosphorylation of undecaprenyl diphosphate (UPP). Confers resistance to bacitracin. The chain is Undecaprenyl-diphosphatase from Desulforudis audaxviator (strain MP104C).